The sequence spans 401 residues: Argininosuccinate synthase (401 aa).

8–16 (AYSGGLDTS) is a binding site for ATP. Residue Tyr85 participates in L-citrulline binding. An ATP-binding site is contributed by Gly115. Positions 117, 121, and 122 each coordinate L-aspartate. Asn121 contacts L-citrulline. Positions 125, 173, 258, and 270 each coordinate L-citrulline.

It belongs to the argininosuccinate synthase family. Type 1 subfamily. As to quaternary structure, homotetramer.

The protein localises to the cytoplasm. It catalyses the reaction L-citrulline + L-aspartate + ATP = 2-(N(omega)-L-arginino)succinate + AMP + diphosphate + H(+). Its pathway is amino-acid biosynthesis; L-arginine biosynthesis; L-arginine from L-ornithine and carbamoyl phosphate: step 2/3. In Staphylococcus epidermidis (strain ATCC 35984 / DSM 28319 / BCRC 17069 / CCUG 31568 / BM 3577 / RP62A), this protein is Argininosuccinate synthase.